Reading from the N-terminus, the 414-residue chain is Probable isoprenylcysteine alpha-carbonyl methylesterase ICME (414 aa).

A disordered region spans residues M1–T54. Transmembrane regions (helical) follow at residues L90–Y110 and V145–L165. Substrate-binding positions include G151–A153 and Q222–A224. Active-site residues include S223, D323, and H355.

The protein belongs to the AB hydrolase superfamily. Isoprenylcysteine methylesterase family.

Its subcellular location is the endoplasmic reticulum membrane. The protein resides in the golgi apparatus membrane. It carries out the reaction [protein]-C-terminal S-[(2E,6E)-farnesyl]-L-cysteine methyl ester + H2O = [protein]-C-terminal S-[(2E,6E)-farnesyl]-L-cysteine + methanol + H(+). Catalyzes the demethylation of isoprenylcysteine methylesters. The chain is Probable isoprenylcysteine alpha-carbonyl methylesterase ICME (IMCE) from Oryza sativa subsp. japonica (Rice).